Consider the following 353-residue polypeptide: Inactive ADP-ribosyltransferase ARH2 (353 aa).

Position 27 is a phosphoserine (Ser27).

This sequence belongs to the ADP-ribosylglycohydrolase family. Expressed in the embryonic heart at E11.5.

The protein resides in the cytoplasm. It localises to the myofibril. It is found in the sarcomere. In terms of biological role, required for myofibril assembly and outgrowth of the cardiac chambers in the developing heart. Appears to be catalytically inactive, showing no activity against O-acetyl-ADP-ribose. This is Inactive ADP-ribosyltransferase ARH2 (Adprhl1) from Mus musculus (Mouse).